A 538-amino-acid chain; its full sequence is MAQKPLRLLTCGDVEGKFDILFNRVQAIQKKSGNFDLLLCVGNFFGSTPDAEWEEYKTGTKKAPIQTYVLGANNQETVKYFQDADGCELAENITYLGRKGIFTGSSGLQIVYLSGTESLNEPVPGYSFSPKDVSSLRTMLCTTSQFKGVDILLTSPWPKYVGNFGNSSGEVDTKKCGSALVSSLATGLKPRYHFAALEKTYYERLPYRNHIVLQENAQHATRFIALANVGNPEKKKYLYAFSIVPMKLMDAAELVKQPPDVTENPYRKSGQEASTGKQILAPVEESACQFFFDLNEKQGRKRSSTGRDSKSSPHPKQPRKPPQPPGPCWFCLASPEVEKHLVVNIGTHCYLALAKGGLSDDHVLILPIGHYQSVVELSAEVVEEVEKYKATLRRFFKSRGKRCVVFERNYKSHHLQLQVIPVPVSCCATDDIKDAFITQAQEQQIELLEIPEHSDIKQIAQPGAAYFYVELDTGEKLFHRIKKNFPLQFGREVLASEAILNVPDKSDWRQCQISKEDEETLARCFRKDFEPYDFTLDD.

Disordered stretches follow at residues 259-278 (PDVT…TGKQ) and 298-324 (QGRK…PPQP).

Belongs to the CWF19 family.

In Pongo abelii (Sumatran orangutan), this protein is CWF19-like protein 1 (CWF19L1).